Consider the following 309-residue polypeptide: Olfactory receptor 5H17 (309 aa).

Residues 1-28 (MEKKNETLWTEFVLTGLTCLPQWKPLLF) are Extracellular-facing. Asn-5 carries N-linked (GlcNAc...) asparagine glycosylation. Residues 29-49 (LVFLVIYFMTIVGNLGLITLI) traverse the membrane as a helical segment. The Cytoplasmic portion of the chain corresponds to 50–56 (WNDPHLH). The chain crosses the membrane as a helical span at residues 57–77 (IPMYLFLSNLAFVDTWLSSTV). Topologically, residues 78–93 (TPRMLFNLLDKGKVIS) are extracellular. Residues 94–114 (VAECKTQFFSFAISVTTECFL) form a helical membrane-spanning segment. Cys-97 and Cys-189 are joined by a disulfide. Residues 115-144 (LAAMAYDRYAAICNPLLYPVIMTNRLCVRL) lie on the Cytoplasmic side of the membrane. Residues 145 to 165 (LALSFIGGFLHAVIHESFLSR) form a helical membrane-spanning segment. Topologically, residues 166-198 (LTFCNSNIIYHFYCDVIPLLKISCTDPSLNYLI) are extracellular. The helical transmembrane segment at 199 to 219 (IFIFSGSIQVFTIMTVLISYT) threads the bilayer. Over 220–239 (FVLFTILKKKSDKGIRKAFS) the chain is Cytoplasmic. Residues 240–260 (TCGAHLLSVSLYYGPLLFMYV) form a helical membrane-spanning segment. At 261-271 (HPASSEVDDQD) the chain is on the extracellular side. A helical transmembrane segment spans residues 272-292 (MILSLFYTVIIPVLNPIIYSL). The Cytoplasmic segment spans residues 293 to 309 (RNKQVIDSLKKMLKMMV).

The protein belongs to the G-protein coupled receptor 1 family.

It is found in the cell membrane. Its function is as follows. Potential odorant receptor. The sequence is that of Olfactory receptor 5H17 from Mus musculus (Mouse).